The chain runs to 537 residues: Hydroxylamine reductase (537 aa).

[4Fe-4S] cluster contacts are provided by Cys-3, Cys-6, Cys-15, and Cys-21. Hybrid [4Fe-2O-2S] cluster-binding residues include His-239, Glu-263, Cys-307, Cys-393, Cys-421, Cys-446, Glu-480, and Lys-482. Cys-393 bears the Cysteine persulfide mark.

This sequence belongs to the HCP family. It depends on [4Fe-4S] cluster as a cofactor. Hybrid [4Fe-2O-2S] cluster serves as cofactor.

Its subcellular location is the cytoplasm. The catalysed reaction is A + NH4(+) + H2O = hydroxylamine + AH2 + H(+). Catalyzes the reduction of hydroxylamine to form NH(3) and H(2)O. The sequence is that of Hydroxylamine reductase from Lawsonia intracellularis (strain PHE/MN1-00).